Reading from the N-terminus, the 366-residue chain is Cobalt-precorrin-5B C(1)-methyltransferase (366 aa).

It belongs to the CbiD family.

The catalysed reaction is Co-precorrin-5B + S-adenosyl-L-methionine = Co-precorrin-6A + S-adenosyl-L-homocysteine. It participates in cofactor biosynthesis; adenosylcobalamin biosynthesis; cob(II)yrinate a,c-diamide from sirohydrochlorin (anaerobic route): step 6/10. Catalyzes the methylation of C-1 in cobalt-precorrin-5B to form cobalt-precorrin-6A. This is Cobalt-precorrin-5B C(1)-methyltransferase from Hahella chejuensis (strain KCTC 2396).